The sequence spans 158 residues: Phospholipase A2 AP-PLA2-II (158 aa).

The signal sequence occupies residues 1 to 16 (MKTFLILAMAVALAKA). The propeptide occupies 17–23 (QSTDEIT). 6 disulfides stabilise this stretch: Cys51–Cys158, Cys53–Cys69, Cys68–Cys138, Cys75–Cys131, Cys85–Cys124, and Cys109–Cys129. 2 residues coordinate Ca(2+): Gly54 and Gly56. His72 is an active-site residue. Asp73 contacts Ca(2+). The active site involves Asp132.

The protein belongs to the phospholipase A2 family. Group I subfamily. As to quaternary structure, monomer. Ca(2+) is required as a cofactor. Expressed by the venom gland.

It is found in the secreted. The enzyme catalyses a 1,2-diacyl-sn-glycero-3-phosphocholine + H2O = a 1-acyl-sn-glycero-3-phosphocholine + a fatty acid + H(+). Its function is as follows. Starfish phospholipase A2 (PLA2) that has hemorrhagic and capillary permeability-increasing activities and hence is considered to be deeply involved in the local inflammation. Shows hemolytic activity only in the presence of phosphatidylcholine (PC). PLA2 catalyzes the calcium-dependent hydrolysis of the 2-acyl groups in 3-sn-phosphoglycerides. In Acanthaster planci (Crown-of-thorns starfish), this protein is Phospholipase A2 AP-PLA2-II.